The following is a 135-amino-acid chain: HTH-type transcriptional repressor RghR (135 aa).

The region spanning 8–63 is the HTH cro/C1-type domain; the sequence is LRALREERKLTVNQLATYSGVSAAGISRIENGKRGVPKPATIKKLAEALKIPYEGL. The segment at residues 19-38 is a DNA-binding region (H-T-H motif); the sequence is VNQLATYSGVSAAGISRIEN.

Represses the expression of yvaM and both rapG and rapH. Binds directly to the promoter regions of yvaM, rapG and rapH. The polypeptide is HTH-type transcriptional repressor RghR (rghR) (Bacillus subtilis (strain 168)).